We begin with the raw amino-acid sequence, 206 residues long: Isopentenyl-diphosphate Delta-isomerase (206 aa).

Mn(2+) is bound by residues His44 and His51. A Nudix hydrolase domain is found at 49–183 (ALHLAFSCHV…PWAFSPWLVL (135 aa)). Cys86 is a catalytic residue. Cys86 contacts Mg(2+). Residue His88 participates in Mn(2+) binding. Glu106 is a Mg(2+) binding site. Glu133 and Glu135 together coordinate Mn(2+). Glu135 is a catalytic residue.

It belongs to the IPP isomerase type 1 family. Requires Mg(2+) as cofactor. It depends on Mn(2+) as a cofactor.

It localises to the cytoplasm. It catalyses the reaction isopentenyl diphosphate = dimethylallyl diphosphate. It functions in the pathway isoprenoid biosynthesis; dimethylallyl diphosphate biosynthesis; dimethylallyl diphosphate from isopentenyl diphosphate: step 1/1. Functionally, catalyzes the 1,3-allylic rearrangement of the homoallylic substrate isopentenyl (IPP) to its highly electrophilic allylic isomer, dimethylallyl diphosphate (DMAPP). This Agromyces mediolanus (Corynebacterium mediolanum) protein is Isopentenyl-diphosphate Delta-isomerase.